The chain runs to 225 residues: Lipoprotein CseA (225 aa).

Positions 1-36 are cleaved as a signal peptide; that stretch reads MRGLTDGRTPRGTRRTTQAASTAVAVFVALGVSLAG. Cys37 carries N-palmitoyl cysteine lipidation. Cys37 is lipidated: S-diacylglycerol cysteine. Disordered regions lie at residues 40–77 and 205–225; these read GGTG…APDR and THND…EPDS. Low complexity predominate over residues 60-73; the sequence is SASPAPAAKASPSK.

The protein resides in the cell membrane. May be involved in the stabilization of the cell envelope or may interact with the sensor protein CseC to modulate its activity, in response to cell envelope stress. The protein is Lipoprotein CseA (cseA) of Streptomyces coelicolor (strain ATCC BAA-471 / A3(2) / M145).